The chain runs to 376 residues: METLANRLDVCQDKMLELYEKDSNKLEDQIMHWQLMRVENALLYKARECGLTHIGHQVVPPLSVTKAKARSAIEVHVALLQLQESAYAQDSWTLRDTSREMWDTVPKKCWKKRGVTVEVRYDGDETKSMCYVHWRDIFTQNYSDDKWVKVAGHVSYEGLYYIHEGEQTFYVKFKDDAYVYGETGKWEVHVGGKVIHHHAFDPVSSTREIPAAGPLCTGDTTKASTETSVGATEGPQQKRQRLETLNWEQQQRQYPQTPSTQTTERASQPLDVTRTSDCDTTCPYTVGHPSDPDCAPVVHLKGDPNCLKCFRYRLHKGKRKLYCKTSSTWRWSCESENQAAFVTIWYTSYSQRNEFLSTVKVPPGIQVILGHMSMFV.

The segment at 1 to 206 (METLANRLDV…HHAFDPVSST (206 aa)) is transactivation domain. A disordered region spans residues 211–271 (AAGPLCTGDT…TTERASQPLD (61 aa)). 2 stretches are compositionally biased toward polar residues: residues 218–237 (GDTT…GPQQ) and 246–266 (NWEQ…TERA). A DNA-binding domain region spans residues 294 to 376 (CAPVVHLKGD…VILGHMSMFV (83 aa)). K301 participates in a covalent cross-link: Glycyl lysine isopeptide (Lys-Gly) (interchain with G-Cter in SUMO).

Belongs to the papillomaviridae E2 protein family. In terms of assembly, binds DNA as homodimer. Interacts with protein E1; this interaction greatly increases E1 DNA-binding activity. Interacts with protein L1; this interaction enhances E2-dependent replication and transcription activation. Interacts with protein L2; this interaction inhibits E2 transcriptional activity but not DNA replication function E2. Interacts with protein E7; this interaction inhibits E7 oncogenic activity. Interacts with host TAF1; this interaction modulates E2-dependent transcriptional regulation. Interacts with host BRD4; this interaction mediates E2 transcriptional activation function. Additionally, the interaction with host BRD4 on mitotic chromosomes mediates tethering of the viral genome. Interacts with host TOPBP1; this interaction is required for optimal viral DNA replication. Phosphorylated. Post-translationally, sumoylation plays a regulatory role in E2 transcriptional activity.

The protein resides in the host nucleus. Its function is as follows. Plays a role in the initiation of viral DNA replication. A dimer of E2 interacts with a dimer of E1 in order to improve specificity of E1 DNA binding activity. Once the complex recognizes and binds DNA at specific sites, the E2 dimer is removed from DNA. E2 also regulates viral transcription through binding to the E2RE response element (5'-ACCNNNNNNGGT-3') present in multiple copies in the regulatory regions of the viral genome. Activates or represses transcription depending on E2RE's position with regards to proximal promoter elements including the TATA-box. Repression occurs by sterically hindering the assembly of the transcription initiation complex. The protein is Regulatory protein E2 of Homo sapiens (Human).